Here is a 176-residue protein sequence, read N- to C-terminus: Sigma intracellular receptor 2 (176 aa).

Over 1–9 (MGAPATRRC) the chain is Cytoplasmic. The helical transmembrane segment at 10-30 (VEWLLGLYFLSHIPITLFMDL) threads the bilayer. The EXPERA domain occupies 10-158 (VEWLLGLYFL…PYLLIPFILL (149 aa)). The Lumenal portion of the chain corresponds to 31–68 (QAVLPRELYPVEFRNLLKWYAKEFKDPLLQEPPAWFKS). The helical transmembrane segment at 69–89 (FLFCELVFQLPFFPIATYAFL) threads the bilayer. Cholesterol-binding residues include valine 75 and glutamine 77. Residues 90–99 (KGSCKWIRTP) are Cytoplasmic-facing. A helical membrane pass occupies residues 100 to 120 (AIIYSVHTMTTLIPILSTFLF). The interval 108 to 176 (MTTLIPILST…YKYEEKRKKK (69 aa)) is required for interaction with Hst1/HTN1. Topologically, residues 121–140 (EDFSKASGFKGQRPETLHER) are lumenal. The helical transmembrane segment at 141–161 (LTLVSVYAPYLLIPFILLIFM) threads the bilayer. Residues 162–176 (LRSPYYKYEEKRKKK) are Cytoplasmic-facing. The short motif at 172–176 (KRKKK) is the ER retention motif element.

It belongs to the TMEM97/sigma-2 receptor family. Homodimer. Interacts with NPC1; the interaction impairs NPC1-mediated cholesterol transport. Interacts with PGRMC1 and LDLR; the interaction increases LDL internalization. Interacts with histatin 1/HTN1; the interaction induces HTN1-stimulating wound healing. Interacts with TSPO. Forms a complex with TSPO and PGRMC1; the interaction occurs in MIA PaCa-2 cells but not in MCF7 cells. Widely expressed in normal tissues. Expressed in pancreatic, renal, breast, colon, ovarian surface epithelial (OSE) cells. Highly expressed in various proliferating cancer cells.

The protein resides in the rough endoplasmic reticulum membrane. The protein localises to the nucleus membrane. In terms of biological role, sigma-2 receptor which contributes to ameliorate dysfunctional cellular processes and slow degenerative progression by regulating cell functions including cholesterol biosynthesis/trafficking, membrane trafficking, autophagy, lipid membrane-bound protein trafficking, and receptor stabilization at the cell surface. Forms a ternary complex with PGRMC1 receptor and low density lipoprotein receptor/LDLR at the plasma membrane, which increases LDLR-mediated LDL cholesterol internalization. Decreases lysosomal sterol transporter NPC1 availability to the cell, probably through NPC1-binding, hence controlling lipid transport, including cholesterol and LBPA, outside of late endosome/lysosome. Binds regio- and stereoselective ligand 20(S)-hydroxycholesterol (20(S)-OHC) which enhances TMEM97-NPC1 interaction and decreases TMEM97-PGRMC1 and TMEM97-TSPO interactions, thereby linking OHC binding to cholesterol homeostasis. Also able to bind cholesterol. Binds histatin 1 (Hst 1)/HN1 salivary peptide at the ER membrane, which is critical for increasing mitochondria-ER contacts and stimulating Hst1 wound healing properties. May alter the activity of some cytochrome P450 proteins. Although shows homologies with sterol isomerases (EXPERA domain), not able to catalyze sterol isomerization. However, may act as sensors of these molecules. Acts as a quality control factor in the ER, promoting the proteolytic degradation of nonproductive and extramitochondrial precursor proteins in the ER membrane thus removing them from the ER surface. The polypeptide is Sigma intracellular receptor 2 (Homo sapiens (Human)).